We begin with the raw amino-acid sequence, 149 residues long: UPF0178 protein Sama_3557 (149 aa).

Belongs to the UPF0178 family.

This chain is UPF0178 protein Sama_3557, found in Shewanella amazonensis (strain ATCC BAA-1098 / SB2B).